A 315-amino-acid chain; its full sequence is Protoheme IX farnesyltransferase 1 (315 aa).

Helical transmembrane passes span 30 to 50 (PGII…AWIQ), 56 to 76 (GGPG…LVMA), 106 to 126 (IPPP…FIML), 132 to 152 (LTAV…TLWF), 162 to 182 (VGSF…TGYI), 186 to 206 (AILL…AIGI), 249 to 269 (LYID…AIWL), and 289 to 309 (FFYS…DSFI).

Belongs to the UbiA prenyltransferase family. Protoheme IX farnesyltransferase subfamily. In terms of assembly, interacts with CtaA.

It localises to the cell membrane. It catalyses the reaction heme b + (2E,6E)-farnesyl diphosphate + H2O = Fe(II)-heme o + diphosphate. Its pathway is porphyrin-containing compound metabolism; heme O biosynthesis; heme O from protoheme: step 1/1. Converts heme B (protoheme IX) to heme O by substitution of the vinyl group on carbon 2 of heme B porphyrin ring with a hydroxyethyl farnesyl side group. The protein is Protoheme IX farnesyltransferase 1 of Bacillus velezensis (strain DSM 23117 / BGSC 10A6 / LMG 26770 / FZB42) (Bacillus amyloliquefaciens subsp. plantarum).